Consider the following 366-residue polypeptide: tRNA/tmRNA (uracil-C(5))-methyltransferase (366 aa).

S-adenosyl-L-methionine contacts are provided by glutamine 190, tyrosine 218, asparagine 223, glutamate 239, and aspartate 299. Catalysis depends on cysteine 324, which acts as the Nucleophile. Residue glutamate 358 is the Proton acceptor of the active site.

Belongs to the class I-like SAM-binding methyltransferase superfamily. RNA M5U methyltransferase family. TrmA subfamily.

It carries out the reaction uridine(54) in tRNA + S-adenosyl-L-methionine = 5-methyluridine(54) in tRNA + S-adenosyl-L-homocysteine + H(+). It catalyses the reaction uridine(341) in tmRNA + S-adenosyl-L-methionine = 5-methyluridine(341) in tmRNA + S-adenosyl-L-homocysteine + H(+). Its function is as follows. Dual-specificity methyltransferase that catalyzes the formation of 5-methyluridine at position 54 (m5U54) in all tRNAs, and that of position 341 (m5U341) in tmRNA (transfer-mRNA). The protein is tRNA/tmRNA (uracil-C(5))-methyltransferase of Cellvibrio japonicus (strain Ueda107) (Pseudomonas fluorescens subsp. cellulosa).